A 143-amino-acid polypeptide reads, in one-letter code: ATP synthase F(0) complex subunit C2, mitochondrial (143 aa).

The transit peptide at 1–68 (MYTCAKFVST…RSFQTSAISR (68 aa)) directs the protein to the mitochondrion. The helical transmembrane segment at 84-104 (VGVAGSGAGIGTVFGSLIIGY) threads the bilayer. Lysine 111 carries the post-translational modification N6,N6,N6-trimethyllysine. Residues 119 to 139 (ILGFALSEAMGLFCLMVAFLI) form a helical membrane-spanning segment.

This sequence belongs to the ATPase C chain family. F-type ATPases have 2 components, CF(1) - the catalytic core - and CF(0) - the membrane proton channel. CF(1) has five subunits: alpha(3), beta(3), gamma(1), delta(1), epsilon(1). CF(0) has three main subunits: a, b and c. Interacts with DNAJC30; interaction is direct. Trimethylated by ATPSCKMT at Lys-111. Methylation is required for proper incorporation of the C subunit into the ATP synthase complex and mitochondrial respiration.

The protein resides in the mitochondrion membrane. Mitochondrial membrane ATP synthase (F(1)F(0) ATP synthase or Complex V) produces ATP from ADP in the presence of a proton gradient across the membrane which is generated by electron transport complexes of the respiratory chain. F-type ATPases consist of two structural domains, F(1) - containing the extramembraneous catalytic core and F(0) - containing the membrane proton channel, linked together by a central stalk and a peripheral stalk. During catalysis, ATP synthesis in the catalytic domain of F(1) is coupled via a rotary mechanism of the central stalk subunits to proton translocation. Part of the complex F(0) domain. A homomeric c-ring of probably 10 subunits is part of the complex rotary element. The sequence is that of ATP synthase F(0) complex subunit C2, mitochondrial from Ovis aries (Sheep).